Reading from the N-terminus, the 427-residue chain is Glutamyl-tRNA(Gln) amidotransferase subunit D (427 aa).

The Asparaginase/glutaminase domain maps to E74–N407. Catalysis depends on residues T84, T160, D161, and K240.

This sequence belongs to the asparaginase 1 family. GatD subfamily. Heterodimer of GatD and GatE.

It carries out the reaction L-glutamyl-tRNA(Gln) + L-glutamine + ATP + H2O = L-glutaminyl-tRNA(Gln) + L-glutamate + ADP + phosphate + H(+). In terms of biological role, allows the formation of correctly charged Gln-tRNA(Gln) through the transamidation of misacylated Glu-tRNA(Gln) in organisms which lack glutaminyl-tRNA synthetase. The reaction takes place in the presence of glutamine and ATP through an activated gamma-phospho-Glu-tRNA(Gln). The GatDE system is specific for glutamate and does not act on aspartate. In Aeropyrum pernix (strain ATCC 700893 / DSM 11879 / JCM 9820 / NBRC 100138 / K1), this protein is Glutamyl-tRNA(Gln) amidotransferase subunit D.